The sequence spans 78 residues: MALFEDIQAVIAEQLNVDAAQVTPEAEFVKDLGADSLDVVELIMALEEKFGIEIPDEQAEKIVNVGDVVKYIEDNKLA.

Residues 1 to 76 (MALFEDIQAV…DVVKYIEDNK (76 aa)) form the Carrier domain. Ser36 carries the post-translational modification O-(pantetheine 4'-phosphoryl)serine.

Belongs to the acyl carrier protein (ACP) family. Post-translationally, 4'-phosphopantetheine is transferred from CoA to a specific serine of apo-ACP by AcpS. This modification is essential for activity because fatty acids are bound in thioester linkage to the sulfhydryl of the prosthetic group.

It localises to the cytoplasm. Its pathway is lipid metabolism; fatty acid biosynthesis. Its function is as follows. Carrier of the growing fatty acid chain in fatty acid biosynthesis. The protein is Acyl carrier protein of Helicobacter pylori (strain Shi470).